The sequence spans 109 residues: Large ribosomal subunit protein P1 (109 aa).

The interval 71-109 (APAAASSAPAKKEEPKKEEPKKEEPKEEETDMDMGDLFG) is disordered. Basic and acidic residues predominate over residues 80–95 (AKKEEPKKEEPKKEEP). 3 consecutive repeat copies span residues 81 to 85 (KKEEP), 86 to 90 (KKEEP), and 91 to 95 (KKEEP). A 3 X 5 AA tandem repeats of K-K-E-E-P region spans residues 81–95 (KKEEPKKEEPKKEEP). The segment covering 96-109 (KEEETDMDMGDLFG) has biased composition (acidic residues).

Belongs to the eukaryotic ribosomal protein P1/P2 family. Not phosphorylated.

The polypeptide is Large ribosomal subunit protein P1 (RPLP1) (Tetrahymena thermophila).